An 832-amino-acid polypeptide reads, in one-letter code: Sodium/hydrogen exchanger 3 (832 aa).

The N-terminal stretch at Met1–Ser29 is a signal peptide. Residues Ser30–His66 lie on the Extracellular side of the membrane. A disordered region spans residues Glu31–Glu51. Basic and acidic residues predominate over residues Pro36–Glu51. A helical transmembrane segment spans residues Val67–Leu89. Residues Ser90–Val97 are Cytoplasmic-facing. Residues Pro98–Ala117 form a helical membrane-spanning segment. At Asp118–Thr126 the chain is on the extracellular side. Residues Pro127–Tyr144 form a helical membrane-spanning segment. Residues Phe145 to Pro147 lie on the Cytoplasmic side of the membrane. A helical transmembrane segment spans residues Asn148–Leu183. Residues Gly153, Gly156, and Thr157 each coordinate a 1,2-diacyl-sn-glycero-3-phospho-(1D-myo-inositol). Over Gly184–Phe196 the chain is Extracellular. Residues Leu197–Val218 traverse the membrane as a helical segment. Residues His219–Val220 are Cytoplasmic-facing. Residues Asn221–Val252 traverse the membrane as a helical segment. Residues Gly253–Gly259 are Extracellular-facing. A helical transmembrane segment spans residues Leu260–Thr294. Residues Lys295 to His296 are Cytoplasmic-facing. Residues Val297–Leu319 traverse the membrane as a helical segment. The Extracellular portion of the chain corresponds to Ser320–Leu321. The chain crosses the membrane as a helical span at residues Ser322–Val338. Topologically, residues Lys339–Gln345 are cytoplasmic. Residues Ser346–Val374 traverse the membrane as a helical segment. At Asn375–Asn382 the chain is on the extracellular side. The chain crosses the membrane as a helical span at residues Thr383–Gln404. Topologically, residues Thr405 to Glu417 are cytoplasmic. The helical transmembrane segment at Ile418 to Leu441 threads the bilayer. Residues Asp442–Glu448 lie on the Extracellular side of the membrane. Residues Arg449–Arg482 form a helical membrane-spanning segment. Residues Ser483 to Met832 are Cytoplasmic-facing. A 1,2-diacyl-sn-glycero-3-phospho-(1D-myo-inositol) contacts are provided by Gln512, Ile513, and His515. A disordered region spans residues Thr740 to Asn760.

Belongs to the monovalent cation:proton antiporter 1 (CPA1) transporter (TC 2.A.36) family. As to quaternary structure, homodimer. In terms of tissue distribution, detected in early distal renal tubules in the kidney bundle zone, in proximal and late distal tubules in the kidney sinus zone, in absorptive epithelial cells of the intestine and in rectal epithelium (at protein level). Isoform 1 is expressed strongly in the gills, at intermediate levels in the kidney, spleen, rectum, spiral intestine and skin, and weakly in the brain, blood and rectal gland. Isoform 2 is expressed strongly in the kidney, rectum and spiral intestine, and weakly in muscles and the rectal gland.

It localises to the apical cell membrane. It is found in the cell membrane. The protein localises to the recycling endosome membrane. The protein resides in the early endosome membrane. It carries out the reaction Na(+)(in) + H(+)(out) = Na(+)(out) + H(+)(in). Its activity is regulated as follows. Seems to switch between active and inactive modes in response to various stimuli. Activated directly or indirectly by membrane phosphatidylinositol (PIs). Regulated by a variety of auxiliary proteins, which facilitate the maturation, cell surface expression and function of the transporter. Inhibited specifically by the drug tenapanor. Functionally, plasma membrane Na(+)/H(+) antiporter. Exchanges intracellular H(+) ions for extracellular Na(+) in 1:1 stoichiometry, playing a key role in salt and fluid absorption and pH homeostasis. Major apical Na(+)/H(+) exchanger in kidney and intestine playing an important role in renal and intestine Na(+) absorption and blood pressure regulation. This is Sodium/hydrogen exchanger 3 from Triakis scyllium (Banded houndshark).